A 259-amino-acid chain; its full sequence is L-arginine-binding protein (259 aa).

The signal sequence occupies residues 1–21 (MKKLALLGALALSVLSLPTFA).

The protein belongs to the bacterial solute-binding protein 3 family.

It localises to the periplasm. Functionally, binds L-arginine with high affinity. Shows no measurable affinity for L-ornithine. The chain is L-arginine-binding protein from Pseudomonas aeruginosa (strain ATCC 15692 / DSM 22644 / CIP 104116 / JCM 14847 / LMG 12228 / 1C / PRS 101 / PAO1).